Consider the following 589-residue polypeptide: UvrABC system protein C (589 aa).

The region spanning 13 to 90 is the GIY-YIG domain; it reads PNPGCYLFKN…IKTHTPKYNF (78 aa). Positions 194–229 constitute a UVR domain; that stretch reads KDILKKLHHLMQKASEKMFYEKAQEYRDIIDSIKQT.

Belongs to the UvrC family. In terms of assembly, interacts with UvrB in an incision complex.

Its subcellular location is the cytoplasm. The UvrABC repair system catalyzes the recognition and processing of DNA lesions. UvrC both incises the 5' and 3' sides of the lesion. The N-terminal half is responsible for the 3' incision and the C-terminal half is responsible for the 5' incision. This chain is UvrABC system protein C, found in Aster yellows witches'-broom phytoplasma (strain AYWB).